The primary structure comprises 158 residues: Ribonuclease HI (158 aa).

The RNase H type-1 domain maps to 3–144; it reads ELKLIHIFTD…CDQLARAAAE (142 aa). Residues Asp12, Glu50, Asp72, and Asp136 each contribute to the Mg(2+) site.

Belongs to the RNase H family. As to quaternary structure, monomer. Mg(2+) is required as a cofactor.

It is found in the cytoplasm. It carries out the reaction Endonucleolytic cleavage to 5'-phosphomonoester.. Functionally, endonuclease that specifically degrades the RNA of RNA-DNA hybrids. In Shewanella oneidensis (strain ATCC 700550 / JCM 31522 / CIP 106686 / LMG 19005 / NCIMB 14063 / MR-1), this protein is Ribonuclease HI.